Here is a 502-residue protein sequence, read N- to C-terminus: Zinc finger C3HC-type protein 1 (502 aa).

Ala-2 bears the N-acetylalanine mark. Phosphoserine is present on Ser-24. Phosphothreonine is present on Thr-28. The disordered stretch occupies residues 36–73 (IDEGIAPEEGGVDAKDTSATSQSVNGSPQAEQPSLEST). Residues 52–72 (TSATSQSVNGSPQAEQPSLES) show a composition bias toward polar residues. Phosphoserine occurs at positions 58 and 62. Thr-84 bears the Phosphothreonine mark. The C3HC-type zinc-finger motif lies at 102–156 (CAKYGWVTVECDMLKCSSCQAFLCASLQPAFDFDRYKQRCAELKKALCTAHEKFC). The interval 170 to 210 (LPLDEPAILVSEFLDRFQSLCHLDLQLPSLRPEDLKTMCLT) is F-box-like. The segment at 302–423 (SSPIPGLEGR…SSRSFFDPTS (122 aa)) is disordered. Residues Ser-321 and Ser-329 each carry the phosphoserine modification. Residues 327–338 (TRSQDATFSPGS) are compositionally biased toward polar residues. Thr-333 is subject to Phosphothreonine. A phosphoserine mark is found at Ser-335, Ser-338, Ser-344, Ser-354, Ser-359, and Ser-370. Residues 351–360 (RTRSWDSSSP) are compositionally biased toward polar residues. A compositionally biased stretch (low complexity) spans 371–380 (PTTRTRPVTR). At Ser-381 the chain carries Phosphoserine. Phosphothreonine is present on residues Thr-384 and Thr-387. Ser-395 is subject to Phosphoserine. The Nuclear localization signal motif lies at 396–402 (PLRKAKR). Ser-407 and Ser-483 each carry phosphoserine. Positions 407-422 (SSSSSDTSSRSFFDPT) are enriched in low complexity.

Interacts with TPR; this interaction mediates ZC3HC1 nuclear envelopes (NE)-association but also required for proper positioning of a substantial amount of TPR at the nuclear basket (NB). Phosphorylated. May also be weakly phosphorylated on Tyr residues. In terms of tissue distribution, widely expressed. Highly expressed in heart, skeletal muscle and testis. Expressed in brain, placenta, lung, kidney, liver, pancreas, spleen, thymus, prostate, ovary small intestine and colon. Weakly or not expressed in leukocytes.

The protein localises to the nucleus. Its subcellular location is the nucleus envelope. Functionally, required for proper positioning of a substantial amount of TPR at the nuclear basket (NB) through interaction with TPR. The sequence is that of Zinc finger C3HC-type protein 1 from Homo sapiens (Human).